A 117-amino-acid polypeptide reads, in one-letter code: DNA-directed RNA polymerase subunit omega (117 aa).

This sequence belongs to the RNA polymerase subunit omega family. The RNAP catalytic core consists of 2 alpha, 1 beta, 1 beta' and 1 omega subunit. When a sigma factor is associated with the core the holoenzyme is formed, which can initiate transcription.

It carries out the reaction RNA(n) + a ribonucleoside 5'-triphosphate = RNA(n+1) + diphosphate. In terms of biological role, promotes RNA polymerase assembly. Latches the N- and C-terminal regions of the beta' subunit thereby facilitating its interaction with the beta and alpha subunits. This Ruegeria pomeroyi (strain ATCC 700808 / DSM 15171 / DSS-3) (Silicibacter pomeroyi) protein is DNA-directed RNA polymerase subunit omega.